Consider the following 176-residue polypeptide: MDLPAPIHDFLLVFLGLGLIVGGLGVVLLTNPIYSAFSLGLVLVCISLFHIPANSHFVAAAQLLIYVGAINVLIVFAVMFMNGSEYYNDFHLWTVGDGVTSLVCTSIFVSLITTISDTSWYGIIWTTRSNQIIEQDLINKGQQLGIHLSTDFFLPFELISIILLVALIGAIAMARQ.

A run of 5 helical transmembrane segments spans residues 10 to 30 (FLLV…VLLT), 33 to 53 (IYSA…HIPA), 61 to 81 (AQLL…VMFM), 92 to 112 (LWTV…VSLI), and 152 to 172 (FFLP…GAIA).

It belongs to the complex I subunit 6 family. As to quaternary structure, NDH is composed of at least 16 different subunits, 5 of which are encoded in the nucleus.

Its subcellular location is the plastid. The protein resides in the chloroplast thylakoid membrane. The catalysed reaction is a plastoquinone + NADH + (n+1) H(+)(in) = a plastoquinol + NAD(+) + n H(+)(out). It catalyses the reaction a plastoquinone + NADPH + (n+1) H(+)(in) = a plastoquinol + NADP(+) + n H(+)(out). In terms of biological role, NDH shuttles electrons from NAD(P)H:plastoquinone, via FMN and iron-sulfur (Fe-S) centers, to quinones in the photosynthetic chain and possibly in a chloroplast respiratory chain. The immediate electron acceptor for the enzyme in this species is believed to be plastoquinone. Couples the redox reaction to proton translocation, and thus conserves the redox energy in a proton gradient. In Nandina domestica (Heavenly bamboo), this protein is NAD(P)H-quinone oxidoreductase subunit 6, chloroplastic (ndhG).